The primary structure comprises 379 residues: Probable purine permease 11 (379 aa).

10 helical membrane-spanning segments follow: residues 43–63 (WVLVSVNIFFLIGGQAASVLL), 76–96 (WMATLVQTAAFPILYIPLLLL), 114–134 (IVLIYVLLGVIIAGDNMLYSV), 144–164 (YSLICATQLAFNAVFSYFINA), 167–187 (FTALILNSVVLLSFSAALIAL), 203–223 (IVGFVCTLAASALYSLLLSLM), 239–259 (VLEMQIYTSLVATCVSVIGLF), 294–313 (VCSVGVVGLIFLVTSLFSNV), 314–330 (ISTLSLAVTPLAALVVF), and 334–354 (MSGVKIMAMLIAIWGFASYVY).

Belongs to the purine permeases (TC 2.A.7.14) family. As to quaternary structure, may form a complex with the potassium channel subunit KAT1.

Its subcellular location is the membrane. This Arabidopsis thaliana (Mouse-ear cress) protein is Probable purine permease 11 (PUP11).